The chain runs to 1104 residues: Translation initiation factor IF-2 (1104 aa).

2 disordered regions span residues 51–444 and 461–497; these read SLLG…LAAQ and LARP…RRRA. 2 stretches are compositionally biased toward low complexity: residues 60 to 119 and 127 to 164; these read AKPA…KPQA and ATPK…AAKP. Residues 189-202 show a composition bias toward pro residues; sequence APTPRPTPARPTPR. Low complexity-rich tracts occupy residues 203–215, 227–246, 311–336, and 366–396; these read PAGA…PTPG, GAPS…KPGA, STTG…PAGM, and PTKA…SFRP. A compositionally biased stretch (basic and acidic residues) spans 406–420; the sequence is GRPDWDDSARLDALR. The segment covering 481-495 has biased composition (basic residues); sequence MRKRKKETARQRQRR. The region spanning 596–768 is the tr-type G domain; it reads RRPPVVTVMG…LLLVTEVEDL (173 aa). Residues 605–612 are G1; it reads GHVDHGKT. Position 605–612 (605–612) interacts with GTP; sequence GHVDHGKT. A G2 region spans residues 630-634; sequence GITQH. The G3 stretch occupies residues 655-658; the sequence is DTPG. GTP-binding positions include 655 to 659 and 709 to 712; these read DTPGH and NKID. The G4 stretch occupies residues 709 to 712; sequence NKID. Positions 745–747 are G5; that stretch reads SAI.

It belongs to the TRAFAC class translation factor GTPase superfamily. Classic translation factor GTPase family. IF-2 subfamily.

The protein resides in the cytoplasm. One of the essential components for the initiation of protein synthesis. Protects formylmethionyl-tRNA from spontaneous hydrolysis and promotes its binding to the 30S ribosomal subunits. Also involved in the hydrolysis of GTP during the formation of the 70S ribosomal complex. This is Translation initiation factor IF-2 from Synechococcus sp. (strain CC9605).